A 71-amino-acid polypeptide reads, in one-letter code: Large ribosomal subunit protein bL31 (71 aa).

Positions 16, 18, 36, and 39 each coordinate Zn(2+).

Belongs to the bacterial ribosomal protein bL31 family. Type A subfamily. Part of the 50S ribosomal subunit. The cofactor is Zn(2+).

In terms of biological role, binds the 23S rRNA. The polypeptide is Large ribosomal subunit protein bL31 (Pseudothermotoga lettingae (strain ATCC BAA-301 / DSM 14385 / NBRC 107922 / TMO) (Thermotoga lettingae)).